We begin with the raw amino-acid sequence, 615 residues long: TANK-binding kinase 1-binding protein 1 (615 aa).

Positions 1 to 279 (MESMFEDDIS…QDLASNQSER (279 aa)) are homodimerization. A coiled-coil region spans residues 48 to 162 (YGDIKERLGG…ALVETHLRQI (115 aa)). Phosphoserine is present on Ser-184. Residues 221 to 276 (VSDLERRRLEEALEAAQGEARGAQLREEQLQAECERLQGELKQLQETRAQDLASNQ) adopt a coiled-coil conformation. Residues 280-329 (DMAWVKRVGDDQVNLALAYTELTEELGRLRELSSLQGRILRTLLQEQARS) are interaction with TBK1 and IKBKE. Positions 326–458 (QARSGGQRHS…SHHVKAGFQG (133 aa)) are disordered. A compositionally biased stretch (pro residues) spans 345–365 (PQCPSPSPPARAAPPCPPCQS). Phosphoserine is present on residues Ser-365, Ser-372, Ser-379, Ser-385, Ser-400, and Ser-415. Pro residues predominate over residues 389 to 406 (PSCPSPVPQRRSPVPPSC). Over residues 416-435 (PVPPSCPAPQPRPPPPPPPG) the composition is skewed to pro residues. A phosphoserine mark is found at Ser-504 and Ser-534. A UBZ1-type zinc finger spans residues 583 to 609 (IRSCPLCQLGFPVGYPDDALIKHIDSH). The Zn(2+) site is built by Cys-586, Cys-589, His-605, and His-609.

Homodimer. May form a heterodimer with NAP1. Interacts with TKB1 and IKBKE. Weakly interacts with DDX3X. In terms of assembly, (Microbial infection) Interacts with vaccinia virus protein C6. In terms of tissue distribution, detected in leukocytes, lung, placenta, small intestine, liver, kidney, spleen, muscle, heart, brain and at low levels in thymus.

Functionally, adapter protein which constitutively binds TBK1 and IKBKE playing a role in antiviral innate immunity. This is TANK-binding kinase 1-binding protein 1 from Homo sapiens (Human).